We begin with the raw amino-acid sequence, 58 residues long: Small ribosomal subunit protein bS21 (58 aa).

Positions 37–58 (FYDKPSVKKRAKSKAAAKYRGR) are disordered. Residues 43–58 (VKKRAKSKAAAKYRGR) show a composition bias toward basic residues.

Belongs to the bacterial ribosomal protein bS21 family.

The polypeptide is Small ribosomal subunit protein bS21 (rpsU) (Chlamydia muridarum (strain MoPn / Nigg)).